A 231-amino-acid chain; its full sequence is MPKHGKKYVEAAKKVDSNKLYSVEDAIKLVKETSYANFDASVEVSYNLSVDPKQADQQIRGSIVLPNGTGKSVKVIVFAEGPQAEAAKAAGADEVGADDLVEKVQNGYLDFDVVIATPMMMAKVGRLGRVLGPKGLMPNPKTGTVTMDTAKAVQNVKAGQVEYRVDRQASIHTAIGKVSFTEEQLTENFRALQNAILRAKPASAKGQYIKSCAVAATFGPGIKLDPIALMA.

It belongs to the universal ribosomal protein uL1 family. Part of the 50S ribosomal subunit.

Its function is as follows. Binds directly to 23S rRNA. The L1 stalk is quite mobile in the ribosome, and is involved in E site tRNA release. Functionally, protein L1 is also a translational repressor protein, it controls the translation of the L11 operon by binding to its mRNA. In Lactobacillus delbrueckii subsp. bulgaricus (strain ATCC 11842 / DSM 20081 / BCRC 10696 / JCM 1002 / NBRC 13953 / NCIMB 11778 / NCTC 12712 / WDCM 00102 / Lb 14), this protein is Large ribosomal subunit protein uL1.